Consider the following 298-residue polypeptide: Protein DR_1172 (298 aa).

LEA-like repeat units follow at residues 48–117 (DAAQ…NVGQ), 128–197 (DQAK…DVAQ), and 201–270 (QGAQ…AGKQ). Residues 174 to 193 (VQDVKADASKAADQAKDKAQ) show a composition bias toward basic and acidic residues. Residues 174-298 (VQDVKADASK…MTGNTNTRKN (125 aa)) form a disordered region. Residues 194 to 208 (DVAQNVKQGAQQAAS) show a composition bias toward low complexity. Residues 209–233 (DAKDKVQDVKADASRAADQAKDKAQ) are compositionally biased toward basic and acidic residues. Residues 275-298 (GSTTNNAGTAGNTGMTGNTNTRKN) are compositionally biased toward low complexity.

It belongs to the LEA type 1 family.

This chain is Protein DR_1172, found in Deinococcus radiodurans (strain ATCC 13939 / DSM 20539 / JCM 16871 / CCUG 27074 / LMG 4051 / NBRC 15346 / NCIMB 9279 / VKM B-1422 / R1).